A 229-amino-acid chain; its full sequence is PKHD-type hydroxylase BRADO4652 (229 aa).

Positions Q78–S180 constitute a Fe2OG dioxygenase domain. The Fe cation site is built by H98, D100, and H161. R171 is a binding site for 2-oxoglutarate.

The cofactor is Fe(2+). Requires L-ascorbate as cofactor.

The chain is PKHD-type hydroxylase BRADO4652 from Bradyrhizobium sp. (strain ORS 278).